We begin with the raw amino-acid sequence, 442 residues long: MADNTNSTGSFSTLVDWQRCSVEEQRQLLTRPAISASDRITAVVSDILTNVKSRGDGALRDYSAQFDKVQVDAIRITDAEIAAASARLGDEVKQAMAIAVRNIETFHNAQKLPIVDIETQPGVRCQQITRPIATVGLYIPGGSAPLPSTVLMLGTPSRIAGCRRVVLCSPPPIADEILYAAQLCGIKEVFQLGGAQAIAAMAFGTDSVPKVDKIFGPGNAYVTEAKRQVSQQLDGAAIDMPAGPSEVLVIADSGATPAFVASDLLSQAEHGPDSQVILLTPDAVMAKAVADAVEEQLTQLSRADIARQALASSRVIVARDLAQCIEISNQYGPEHLIIQTRDAESLVDSITSAGSVFLGDWSPESAGDYASGTNHVLPTYGYTSTYSSLGLADFQKRMTVQQLTPQGLLQLAPTIEILAQAEQLTAHKNAVTLRVAALKEQA.

NAD(+) contacts are provided by Tyr138, Gln196, and Asn219. 3 residues coordinate substrate: Ser245, Gln267, and His270. Gln267 and His270 together coordinate Zn(2+). Residues Glu334 and His335 each act as proton acceptor in the active site. The substrate site is built by His335, Asp368, Glu422, and His427. Asp368 contributes to the Zn(2+) binding site. Zn(2+) is bound at residue His427.

Belongs to the histidinol dehydrogenase family. In terms of assembly, homodimer. Zn(2+) serves as cofactor.

The catalysed reaction is L-histidinol + 2 NAD(+) + H2O = L-histidine + 2 NADH + 3 H(+). It participates in amino-acid biosynthesis; L-histidine biosynthesis; L-histidine from 5-phospho-alpha-D-ribose 1-diphosphate: step 9/9. In terms of biological role, catalyzes the sequential NAD-dependent oxidations of L-histidinol to L-histidinaldehyde and then to L-histidine. The sequence is that of Histidinol dehydrogenase from Pectobacterium atrosepticum (strain SCRI 1043 / ATCC BAA-672) (Erwinia carotovora subsp. atroseptica).